The primary structure comprises 369 residues: Glutamate 5-kinase (369 aa).

K11 is an ATP binding site. The substrate site is built by S51, D138, and N150. ATP is bound by residues 170-171 (TD) and 212-218 (TGGMATK). The region spanning 277-355 (NGTIVIDDGA…QDIYAVLGYE (79 aa)) is the PUA domain.

The protein belongs to the glutamate 5-kinase family.

It localises to the cytoplasm. The catalysed reaction is L-glutamate + ATP = L-glutamyl 5-phosphate + ADP. The protein operates within amino-acid biosynthesis; L-proline biosynthesis; L-glutamate 5-semialdehyde from L-glutamate: step 1/2. Functionally, catalyzes the transfer of a phosphate group to glutamate to form L-glutamate 5-phosphate. The sequence is that of Glutamate 5-kinase from Aliivibrio salmonicida (strain LFI1238) (Vibrio salmonicida (strain LFI1238)).